A 294-amino-acid polypeptide reads, in one-letter code: 4-hydroxy-tetrahydrodipicolinate synthase (294 aa).

Position 47 (Thr-47) interacts with pyruvate. Tyr-135 (proton donor/acceptor) is an active-site residue. The active-site Schiff-base intermediate with substrate is the Lys-163. Residue Val-205 coordinates pyruvate.

It belongs to the DapA family. Homotetramer; dimer of dimers.

It localises to the cytoplasm. The enzyme catalyses L-aspartate 4-semialdehyde + pyruvate = (2S,4S)-4-hydroxy-2,3,4,5-tetrahydrodipicolinate + H2O + H(+). It participates in amino-acid biosynthesis; L-lysine biosynthesis via DAP pathway; (S)-tetrahydrodipicolinate from L-aspartate: step 3/4. Its function is as follows. Catalyzes the condensation of (S)-aspartate-beta-semialdehyde [(S)-ASA] and pyruvate to 4-hydroxy-tetrahydrodipicolinate (HTPA). This chain is 4-hydroxy-tetrahydrodipicolinate synthase, found in Rickettsia canadensis (strain McKiel).